The chain runs to 186 residues: MNLKVLREEARSILLDIVERSAIKKGQLFVLGLSSSEVLGGRIGQHSSLEVGEVIVKLILEELSFRGIHLAVQGCEHINRALVLEESVAEEYRLEIVNVLPSLHAGGSGQLAAFKYMKQPVEVEAIAAHAGLDIGDTSIGMHVKRVQVPLVPIQRELGGAHVTALASRPKLIGGVRARYQPDPIRK.

It belongs to the UPF0340 family.

This chain is UPF0340 protein SEQ_1951, found in Streptococcus equi subsp. equi (strain 4047).